The chain runs to 161 residues: Endoribonuclease YbeY (161 aa).

Histidine 127, histidine 131, and histidine 137 together coordinate Zn(2+).

It belongs to the endoribonuclease YbeY family. The cofactor is Zn(2+).

Its subcellular location is the cytoplasm. Its function is as follows. Single strand-specific metallo-endoribonuclease involved in late-stage 70S ribosome quality control and in maturation of the 3' terminus of the 16S rRNA. The sequence is that of Endoribonuclease YbeY from Listeria innocua serovar 6a (strain ATCC BAA-680 / CLIP 11262).